We begin with the raw amino-acid sequence, 169 residues long: Cuticle protein 21 (169 aa).

6 tandem repeats follow at residues A21–V24, A27–A30, A33–V36, A39–A42, A47–V50, and A53–A56. Positions N65–V135 constitute a Chitin-binding type R&amp;R domain. A run of 3 repeats spans residues A140 to V143, A146 to A149, and A160 to A163.

Its function is as follows. Component of the cuticle of migratory locust which contains more than 100 different structural proteins. The polypeptide is Cuticle protein 21 (ACP21) (Locusta migratoria (Migratory locust)).